The chain runs to 227 residues: Cytochrome c oxidase subunit 2 (227 aa).

Topologically, residues 1-14 (MAYPFQLGFQDAAS) are mitochondrial intermembrane. Residues 15–45 (PIMEELLHFHDHTLMIVFLISSLVLYIITLM) form a helical membrane-spanning segment. Over 46–59 (LTTKLTHTSTMDAQ) the chain is Mitochondrial matrix. The chain crosses the membrane as a helical span at residues 60 to 87 (EVETVWTILPAIILILIALPSLRILYMM). At 88 to 227 (DEVNNPSLTV…VFEKWSVSML (140 aa)) the chain is on the mitochondrial intermembrane side. The Cu cation site is built by histidine 161, cysteine 196, glutamate 198, cysteine 200, histidine 204, and methionine 207. Glutamate 198 lines the Mg(2+) pocket.

This sequence belongs to the cytochrome c oxidase subunit 2 family. As to quaternary structure, component of the cytochrome c oxidase (complex IV, CIV), a multisubunit enzyme composed of 14 subunits. The complex is composed of a catalytic core of 3 subunits MT-CO1, MT-CO2 and MT-CO3, encoded in the mitochondrial DNA, and 11 supernumerary subunits COX4I, COX5A, COX5B, COX6A, COX6B, COX6C, COX7A, COX7B, COX7C, COX8 and NDUFA4, which are encoded in the nuclear genome. The complex exists as a monomer or a dimer and forms supercomplexes (SCs) in the inner mitochondrial membrane with NADH-ubiquinone oxidoreductase (complex I, CI) and ubiquinol-cytochrome c oxidoreductase (cytochrome b-c1 complex, complex III, CIII), resulting in different assemblies (supercomplex SCI(1)III(2)IV(1) and megacomplex MCI(2)III(2)IV(2)). Found in a complex with TMEM177, COA6, COX18, COX20, SCO1 and SCO2. Interacts with TMEM177 in a COX20-dependent manner. Interacts with COX20. Interacts with COX16. The cofactor is Cu cation.

Its subcellular location is the mitochondrion inner membrane. The catalysed reaction is 4 Fe(II)-[cytochrome c] + O2 + 8 H(+)(in) = 4 Fe(III)-[cytochrome c] + 2 H2O + 4 H(+)(out). In terms of biological role, component of the cytochrome c oxidase, the last enzyme in the mitochondrial electron transport chain which drives oxidative phosphorylation. The respiratory chain contains 3 multisubunit complexes succinate dehydrogenase (complex II, CII), ubiquinol-cytochrome c oxidoreductase (cytochrome b-c1 complex, complex III, CIII) and cytochrome c oxidase (complex IV, CIV), that cooperate to transfer electrons derived from NADH and succinate to molecular oxygen, creating an electrochemical gradient over the inner membrane that drives transmembrane transport and the ATP synthase. Cytochrome c oxidase is the component of the respiratory chain that catalyzes the reduction of oxygen to water. Electrons originating from reduced cytochrome c in the intermembrane space (IMS) are transferred via the dinuclear copper A center (CU(A)) of subunit 2 and heme A of subunit 1 to the active site in subunit 1, a binuclear center (BNC) formed by heme A3 and copper B (CU(B)). The BNC reduces molecular oxygen to 2 water molecules using 4 electrons from cytochrome c in the IMS and 4 protons from the mitochondrial matrix. This is Cytochrome c oxidase subunit 2 (MT-CO2) from Balaenoptera physalus (Fin whale).